The chain runs to 128 residues: Calcitonin gene-related peptide 1 (128 aa).

Positions 1–25 (MGFLKFSPFLVVSILLLYQACGLQA) are cleaved as a signal peptide. The propeptide occupies 26–80 (VPLRSTLESSPGMAATLSEEEARLLLAALVQNYMQMKVRELEQEQEAEGSSVTAQ). Cys84 and Cys89 form a disulfide bridge. At Phe119 the chain carries Phenylalanine amide. The propeptide occupies 125–128 (DLQA).

This sequence belongs to the calcitonin family.

The protein resides in the secreted. Its function is as follows. CGRP1/CALCA is a peptide hormone that induces vasodilation mediated by the CALCRL-RAMP1 receptor complex. Dilates a variety of vessels including the coronary, cerebral and systemic vasculature. Its abundance in the CNS also points toward a neurotransmitter or neuromodulator role. It also elevates platelet cAMP. CGRP1 can also bind and activate CALCR-RAMP1 (AMYR1) receptor complex. The protein is Calcitonin gene-related peptide 1 of Rattus norvegicus (Rat).